The sequence spans 548 residues: Leucine-rich repeat LGI family member 3 (548 aa).

An N-terminal signal peptide occupies residues 1-30; sequence MAGLRARRGPGRRLLVLSTLGFCLMLQVSA. An LRRNT domain is found at 31 to 64; the sequence is KRPPKTPPCPPSCSCTRDTAFCVDSKSVPKNLPS. 3 LRR repeats span residues 89-110, 113-134, and 137-158; these read LLQF…AFIG, HLQY…TFRG, and SLTH…IFRP. The LRRCT domain maps to 170-220; the sequence is NALNCDCKVKWLVEWLAHTNTTVAPIYCASPPRFQEHKVQDLPLREFDCIT. An N-linked (GlcNAc...) asparagine glycan is attached at Asn-189. EAR repeat units follow at residues 222–264 and 268–310; these read DFVL…KWDY and QLRD…HWDP. Asn-311 carries N-linked (GlcNAc...) asparagine glycosylation. EAR repeat units follow at residues 314 to 361, 363 to 406, 410 to 453, 455 to 497, and 501 to 543; these read RFTK…RWHQ, GFYS…QWSR, QFVA…RWEG, RFSE…QWDE, and KFVR…RHVV.

As to quaternary structure, interacts with STX1A. Brain.

It is found in the secreted. Its subcellular location is the cytoplasmic vesicle. It localises to the secretory vesicle. The protein resides in the synaptic vesicle. The protein localises to the synapse. It is found in the synaptosome. Its subcellular location is the cell projection. It localises to the axon. In terms of biological role, may participate in the regulation of neuronal exocytosis. The polypeptide is Leucine-rich repeat LGI family member 3 (Lgi3) (Mus musculus (Mouse)).